Consider the following 307-residue polypeptide: Small ribosomal subunit protein uS3 (307 aa).

Positions 17 to 86 (MDEYFAEQLN…NPQIDAQEVK (70 aa)) constitute a KH type-2 domain. The span at 201 to 226 (IEEPAEKPAEKQVEKPAVAPKKEAAK) shows a compositional bias: basic and acidic residues. Residues 201–265 (IEEPAEKPAE…QVEASEDFEE (65 aa)) form a disordered region. The span at 240–265 (PTEEPEVAEPEEAEEAQVEASEDFEE) shows a compositional bias: acidic residues.

The protein belongs to the universal ribosomal protein uS3 family. As to quaternary structure, part of the 30S ribosomal subunit.

Binds the lower part of the 30S subunit head. This Methanosarcina mazei (strain ATCC BAA-159 / DSM 3647 / Goe1 / Go1 / JCM 11833 / OCM 88) (Methanosarcina frisia) protein is Small ribosomal subunit protein uS3.